A 256-amino-acid polypeptide reads, in one-letter code: Thioredoxin-dependent peroxide reductase, mitochondrial (256 aa).

Residues 1 to 61 (MAAAVGRLLR…KLFSTSSSCH (61 aa)) constitute a mitochondrion transit peptide. A Thioredoxin domain is found at 63 to 221 (PAVTQHAPYF…TLRLVKAFQY (159 aa)). K83 is subject to N6-succinyllysine. At K91 the chain carries N6-acetyllysine; alternate. At K91 the chain carries N6-succinyllysine; alternate. The active-site Cysteine sulfenic acid (-SOH) intermediate is the C108. The residue at position 146 (T146) is a Phosphothreonine.

It belongs to the peroxiredoxin family. AhpC/Prx1 subfamily. Homodimer; disulfide-linked, upon oxidation. 6 homodimers assemble to form a ring-like dodecamer. Interacts with NEK6. Interacts with LRRK2. Interacts with MAP3K13. Interacts with RPS6KC1 (via PX domain). Phosphorylated by LRRK2; phosphorylation reduces perodixase activity. In terms of processing, the enzyme can be inactivated by further oxidation of the cysteine sulfenic acid (C(P)-SOH) to sulphinic acid (C(P)-SO2H) and sulphonic acid (C(P)-SO3H) instead of its condensation to a disulfide bond. Post-translationally, S-palmitoylated.

Its subcellular location is the mitochondrion. It localises to the cytoplasm. The protein localises to the early endosome. The catalysed reaction is a hydroperoxide + [thioredoxin]-dithiol = an alcohol + [thioredoxin]-disulfide + H2O. Thiol-specific peroxidase that catalyzes the reduction of hydrogen peroxide and organic hydroperoxides to water and alcohols, respectively. Plays a role in cell protection against oxidative stress by detoxifying peroxides. Acts synergistically with MAP3K13 to regulate the activation of NF-kappa-B in the cytosol. Required for the maintenance of physical strength. The sequence is that of Thioredoxin-dependent peroxide reductase, mitochondrial (PRDX3) from Homo sapiens (Human).